Consider the following 203-residue polypeptide: Endo-type membrane-bound lytic murein transglycosylase A (203 aa).

Residues 1–15 (MKLRWFAFLVVILAG) form the signal peptide. Cysteine 16 carries the N-palmitoyl cysteine lipid modification. Cysteine 16 carries the S-diacylglycerol cysteine lipid modification.

The protein belongs to the transglycosylase Slt family.

The protein localises to the cell outer membrane. The enzyme catalyses Endolytic cleavage of the (1-&gt;4)-beta-glycosidic linkage between N-acetylmuramic acid (MurNAc) and N-acetylglucosamine (GlcNAc) residues in peptidoglycan with concomitant formation of a 1,6-anhydrobond in the MurNAc residue.. Functionally, murein-degrading enzyme. May play a role in recycling of muropeptides during cell elongation and/or cell division. Preferentially cleaves at a distance of more than two disaccharide units from the ends of the glycan chain. This is Endo-type membrane-bound lytic murein transglycosylase A from Salmonella paratyphi C (strain RKS4594).